A 548-amino-acid polypeptide reads, in one-letter code: ADP,ATP carrier protein 1 (548 aa).

Transmembrane regions (helical) follow at residues 39-59 (RPVF…YSVS) and 75-95 (SIPY…VFSI). N-linked (GlcNAc...) asparagine glycosylation occurs at Asn101. Transmembrane regions (helical) follow at residues 107–127 (VFSI…TVLM), 149–169 (MVFM…SWTS), 171–191 (LMYL…FFAL), 204–224 (FIPL…FSMK), 239–259 (LFFR…IYLI), 302–322 (LVLA…MVEA), 350–370 (IQLA…PALI), and 374–394 (GFLY…ASVF). 2 N-linked (GlcNAc...) asparagine glycosylation sites follow: Asn400 and Asn406. A helical membrane pass occupies residues 410 to 430 (LGFVSIGENLWLEQLLGAIIV). Asn488 carries an N-linked (GlcNAc...) asparagine glycan. The helical transmembrane segment at 494–514 (KAAISSLTIVTVITACWGFAV) threads the bilayer.

This sequence belongs to the ADP/ATP translocase tlc family.

Its subcellular location is the cell membrane. Its function is as follows. ATP transporter involved in the uptake of ATP from the host cell cytoplasm. Provides the microsporidian cell with host ATP in exchange for ADP. This is an obligate exchange system. This energy acquiring activity is an important component of microsporidian parasitism. The protein is ADP,ATP carrier protein 1 (ANC1) of Paranosema grylli (Microsporidian parasite).